The following is a 345-amino-acid chain: MTLEMMGSMDLDQIVADAQQSFEQAADITTLENEKARFLGKSGALTELLKGLGKLDPEARKTEGARINVVKQQVEAALTARRQALADALLNQRLTAEAIDVTLPGRGAGAGSLHPVMRTWERVEQIFGSIGFDVADGPEIETDWYNFTSLNSPENHPARSMQDTFYVEGKDADGRQLLLRTHTSPMQVRYARMNRPPIKVIAPGRTYRVDSDATHSPMFNQVEGLWIDENISFADLKGVYTDFLKKFFERDDILVRFRPSYFPFTEPSAEIDMMFEQGKNAGKWLEISGSGQVHPTVIRNMGLDPERYIGFAFGSGLERLTMLRYGVQDLRLFFENDLRFLRQFA.

Glu266 is a Mg(2+) binding site.

The protein belongs to the class-II aminoacyl-tRNA synthetase family. Phe-tRNA synthetase alpha subunit type 1 subfamily. In terms of assembly, tetramer of two alpha and two beta subunits. Mg(2+) serves as cofactor.

It localises to the cytoplasm. It carries out the reaction tRNA(Phe) + L-phenylalanine + ATP = L-phenylalanyl-tRNA(Phe) + AMP + diphosphate + H(+). This is Phenylalanine--tRNA ligase alpha subunit from Burkholderia lata (strain ATCC 17760 / DSM 23089 / LMG 22485 / NCIMB 9086 / R18194 / 383).